The chain runs to 320 residues: Nucleoporin Nup37 (320 aa).

WD repeat units follow at residues 67-113, 118-157, 160-200, and 203-242; these read KEQR…FTSL, GHGD…ENVI, GLSS…TVIS, and SPKF…VPAD.

The protein localises to the nucleus. It is found in the nuclear pore complex. In terms of biological role, as part of the nuclear pore complex (NPC), has a role in its assembly and function. Functionally, (Microbial infection) Required for optimal replication of E.chaffeensis. The sequence is that of Nucleoporin Nup37 from Drosophila melanogaster (Fruit fly).